We begin with the raw amino-acid sequence, 469 residues long: MTNITLMNQLTPKQIVEKLDQYIIGQTGAKKSVAVALRNRYRRQLMDESIRDEIIPKNILMIGPTGVGKTEIARRIAKIVRAPFSKVEATKFTEVGYVGRDVESMVRDLVEVSVRLVKEEKMQLVRVKAEKNAEKRLIKLLAPSQKKKQTTSQNPLEALFGGMNQPDESPEEEVDQELKNKRSQIEWRLQNGELDDEIVTVEVKEQQNPMLDMMRGAGMDQMNGMQDALSGMFPAKKKKRKVTVREAKKILFEDEASKLIDADELAAEGIHRAEQMGMIFIDEIDKIASKEGGGNAQVSREGVQRDILPIVEGSQISTKYGTVNTEYILFIAAGAFHMSKPSDLIPELQGRFPIRIELDKLTQEDFYKILTEPDNALIKQYKALLKTEGIDLIFTKEAVERIAEIAFQVNQDSDNIGARRLHTILEKLLEDLLFEAPEINMESIKVTENYVNEKLAPIMQNKDLTQFIL.

ATP is bound by residues isoleucine 24, 66–71, aspartate 282, glutamate 347, and arginine 419; that span reads GVGKTE.

This sequence belongs to the ClpX chaperone family. HslU subfamily. A double ring-shaped homohexamer of HslV is capped on each side by a ring-shaped HslU homohexamer. The assembly of the HslU/HslV complex is dependent on binding of ATP.

It localises to the cytoplasm. ATPase subunit of a proteasome-like degradation complex; this subunit has chaperone activity. The binding of ATP and its subsequent hydrolysis by HslU are essential for unfolding of protein substrates subsequently hydrolyzed by HslV. HslU recognizes the N-terminal part of its protein substrates and unfolds these before they are guided to HslV for hydrolysis. The sequence is that of ATP-dependent protease ATPase subunit HslU from Listeria monocytogenes serotype 4b (strain CLIP80459).